The following is a 387-amino-acid chain: Oleoyl-12-hydroxylase FAH12 (387 aa).

The disordered stretch occupies residues Met-1–Pro-34. Helical transmembrane passes span Ala-61–Ile-81 and Val-88–Gly-108. The Histidine box-1 signature appears at His-109–His-113. The helical transmembrane segment at Leu-121–Trp-141 threads the bilayer. The short motif at His-145–His-149 is the Histidine box-2 element. Helical transmembrane passes span Val-183 to Ser-203, Ile-229 to Ala-249, and Ala-253 to Ile-273. A Histidine box-3 motif is present at residues His-319 to His-323.

This sequence belongs to the fatty acid desaturase type 1 family. As to expression, expressed in seeds. Barely detected in leaves.

It is found in the microsome membrane. It carries out the reaction a 1-acyl-2-(9Z)-octadecenoyl-sn-glycero-3-phosphocholine + 2 Fe(II)-[cytochrome b5] + O2 + 2 H(+) = a 1-acyl-2-[(R)-12-hydroxyoleoyl]-sn-glycero-3-phosphocholine + 2 Fe(III)-[cytochrome b5] + H2O. It functions in the pathway lipid metabolism; monounsaturated fatty acid biosynthesis. Its activity is regulated as follows. Inhibited by oleoyloxyethyl phosphocholine. In terms of biological role, oleoyl-12-hydroxylase involved in the biosynthesis of ricinoleate (12-hydroxy-cis-9-octadecenoate), the major fatty acid constituent of the oil seeds from castor bean plants. Catalyzes the hydroxylation at the 12-position of 1-acyl-2-oleoyl-sn-glycero-3-phosphocholine (2-oleoyl-PC), which seems to be the actual physiological subtrate. It uses cytochrome b5 as an electron donor. May also be involved in the production of lesquerolic acid (14-hydroxyeicos-cis-ll-enoic acid) in vitro. This is Oleoyl-12-hydroxylase FAH12 from Ricinus communis (Castor bean).